The sequence spans 163 residues: Large ribosomal subunit protein mL59 (163 aa).

Residues 33–53 (PAGADPETHKTPYQEESPNPF) form a disordered region.

The protein belongs to the mitochondrion-specific ribosomal protein mL59 family. As to quaternary structure, component of the mitochondrial large ribosomal subunit (mt-LSU). Mature N.crassa 74S mitochondrial ribosomes consist of a small (37S) and a large (54S) subunit. The 37S small subunit contains a 16S ribosomal RNA (16S mt-rRNA) and 32 different proteins. The 54S large subunit contains a 23S rRNA (23S mt-rRNA) and 42 different proteins.

It is found in the mitochondrion. Functionally, component of the mitochondrial ribosome (mitoribosome), a dedicated translation machinery responsible for the synthesis of mitochondrial genome-encoded proteins, including at least some of the essential transmembrane subunits of the mitochondrial respiratory chain. The mitoribosomes are attached to the mitochondrial inner membrane and translation products are cotranslationally integrated into the membrane. The sequence is that of Large ribosomal subunit protein mL59 (mrpl25) from Neurospora crassa (strain ATCC 24698 / 74-OR23-1A / CBS 708.71 / DSM 1257 / FGSC 987).